Reading from the N-terminus, the 244-residue chain is Protein A47 (244 aa).

It belongs to the orthopoxvirus A47 protein family.

This is Protein A47 from Variola virus.